A 254-amino-acid polypeptide reads, in one-letter code: Coenzyme F420:L-glutamate ligase (254 aa).

GTP is bound by residues 11–14, 40–41, and Lys-45; these read IPLI and ST. A divalent metal cation is bound at residue Asp-109. Asn-112 serves as a coordination point for GTP. Residues Asp-150, Thr-151, and Glu-208 each contribute to the a divalent metal cation site. 206–213 provides a ligand contact to GTP; the sequence is MGEGAGGI.

The protein belongs to the CofE family. In terms of assembly, homodimer. It depends on Mg(2+) as a cofactor. Mn(2+) serves as cofactor. K(+) is required as a cofactor.

It catalyses the reaction oxidized coenzyme F420-0 + GTP + L-glutamate = oxidized coenzyme F420-1 + GDP + phosphate + H(+). The catalysed reaction is oxidized coenzyme F420-1 + GTP + L-glutamate = oxidized coenzyme F420-2 + GDP + phosphate + H(+). It functions in the pathway cofactor biosynthesis; coenzyme F420 biosynthesis. Catalyzes the GTP-dependent successive addition of two or more gamma-linked L-glutamates to the L-lactyl phosphodiester of 7,8-didemethyl-8-hydroxy-5-deazariboflavin (F420-0) to form coenzyme F420-0-glutamyl-glutamate (F420-2) or polyglutamated F420 derivatives. In Methanosarcina mazei (strain ATCC BAA-159 / DSM 3647 / Goe1 / Go1 / JCM 11833 / OCM 88) (Methanosarcina frisia), this protein is Coenzyme F420:L-glutamate ligase.